The sequence spans 312 residues: Ribosomal RNA small subunit methyltransferase H (312 aa).

Residues 34 to 36 (GGH), D54, F78, D100, and Q107 contribute to the S-adenosyl-L-methionine site.

It belongs to the methyltransferase superfamily. RsmH family.

Its subcellular location is the cytoplasm. It catalyses the reaction cytidine(1402) in 16S rRNA + S-adenosyl-L-methionine = N(4)-methylcytidine(1402) in 16S rRNA + S-adenosyl-L-homocysteine + H(+). In terms of biological role, specifically methylates the N4 position of cytidine in position 1402 (C1402) of 16S rRNA. This Salmonella choleraesuis (strain SC-B67) protein is Ribosomal RNA small subunit methyltransferase H.